The sequence spans 248 residues: Ubiquinone/menaquinone biosynthesis C-methyltransferase UbiE (248 aa).

S-adenosyl-L-methionine is bound by residues Ser68, Asp92, and 120–121 (NA).

This sequence belongs to the class I-like SAM-binding methyltransferase superfamily. MenG/UbiE family.

It carries out the reaction a 2-demethylmenaquinol + S-adenosyl-L-methionine = a menaquinol + S-adenosyl-L-homocysteine + H(+). It catalyses the reaction a 2-methoxy-6-(all-trans-polyprenyl)benzene-1,4-diol + S-adenosyl-L-methionine = a 5-methoxy-2-methyl-3-(all-trans-polyprenyl)benzene-1,4-diol + S-adenosyl-L-homocysteine + H(+). The protein operates within quinol/quinone metabolism; menaquinone biosynthesis; menaquinol from 1,4-dihydroxy-2-naphthoate: step 2/2. It functions in the pathway cofactor biosynthesis; ubiquinone biosynthesis. In terms of biological role, methyltransferase required for the conversion of demethylmenaquinol (DMKH2) to menaquinol (MKH2) and the conversion of 2-polyprenyl-6-methoxy-1,4-benzoquinol (DDMQH2) to 2-polyprenyl-3-methyl-6-methoxy-1,4-benzoquinol (DMQH2). The chain is Ubiquinone/menaquinone biosynthesis C-methyltransferase UbiE from Rickettsia prowazekii (strain Madrid E).